We begin with the raw amino-acid sequence, 61 residues long: Small ribosomal subunit protein uS14 (61 aa).

Zn(2+) is bound by residues cysteine 24, cysteine 27, cysteine 40, and cysteine 43.

Belongs to the universal ribosomal protein uS14 family. Zinc-binding uS14 subfamily. Part of the 30S ribosomal subunit. Contacts proteins S3 and S10. The cofactor is Zn(2+).

Its function is as follows. Binds 16S rRNA, required for the assembly of 30S particles and may also be responsible for determining the conformation of the 16S rRNA at the A site. This chain is Small ribosomal subunit protein uS14, found in Borrelia duttonii (strain Ly).